Reading from the N-terminus, the 206-residue chain is Small ribosomal subunit protein uS4 (206 aa).

The 61-residue stretch at glycine 96–lysine 156 folds into the S4 RNA-binding domain.

It belongs to the universal ribosomal protein uS4 family. In terms of assembly, part of the 30S ribosomal subunit. Contacts protein S5. The interaction surface between S4 and S5 is involved in control of translational fidelity.

Functionally, one of the primary rRNA binding proteins, it binds directly to 16S rRNA where it nucleates assembly of the body of the 30S subunit. In terms of biological role, with S5 and S12 plays an important role in translational accuracy. The polypeptide is Small ribosomal subunit protein uS4 (Histophilus somni (strain 2336) (Haemophilus somnus)).